We begin with the raw amino-acid sequence, 314 residues long: 2,3-dihydroxyphenylpropionate/2,3-dihydroxicinnamic acid 1,2-dioxygenase 2 (314 aa).

His-115 (proton donor) is an active-site residue. His-179 functions as the Proton acceptor in the catalytic mechanism.

The protein belongs to the LigB/MhpB extradiol dioxygenase family. As to quaternary structure, homotetramer. Fe(2+) serves as cofactor.

The enzyme catalyses 3-(2,3-dihydroxyphenyl)propanoate + O2 = (2Z,4E)-2-hydroxy-6-oxonona-2,4-dienedioate + H(+). It carries out the reaction (2E)-3-(2,3-dihydroxyphenyl)prop-2-enoate + O2 = (2Z,4E,7E)-2-hydroxy-6-oxonona-2,4,7-trienedioate + H(+). The protein operates within aromatic compound metabolism; 3-phenylpropanoate degradation. Its function is as follows. Catalyzes the non-heme iron(II)-dependent oxidative cleavage of 2,3-dihydroxyphenylpropionic acid and 2,3-dihydroxicinnamic acid into 2-hydroxy-6-ketononadienedioate and 2-hydroxy-6-ketononatrienedioate, respectively. The protein is 2,3-dihydroxyphenylpropionate/2,3-dihydroxicinnamic acid 1,2-dioxygenase 2 (mhpB2) of Pseudomonas putida (Arthrobacter siderocapsulatus).